We begin with the raw amino-acid sequence, 230 residues long: Gilatoxin (230 aa).

One can recognise a Peptidase S1 domain in the interval Ile-1–Ile-230. Disulfide bonds link Cys-7-Cys-146, Cys-26-Cys-42, Cys-125-Cys-193, Cys-157-Cys-172, and Cys-183-Cys-208. His-41 (charge relay system) is an active-site residue. Residue Asn-84 is glycosylated (N-linked (GlcNAc...) asparagine). Asp-93 functions as the Charge relay system in the catalytic mechanism. Ser-187 functions as the Charge relay system in the catalytic mechanism.

This sequence belongs to the peptidase S1 family. Post-translationally, extensively glycosylated, contains approximately 8 mol of monosaccharide per mol of toxin. In terms of tissue distribution, expressed by the mandibular venom gland.

Its subcellular location is the secreted. Has kallikrein-like activity, releases bradykinin from kininogen. Catalyzes the hydrolysis of various arginine ester substrates for trypsin and thrombin and degrades both angiotensin I and II by cleavage of the dipeptide Asp-Arg from the NH2-terminal end. Fibrinogen is also degraded but a fibrin clot is not produced. May have a potentiating effect on potent hemorrhagic toxins present in the venom. This chain is Gilatoxin, found in Heloderma horridum horridum (Mexican beaded lizard).